Reading from the N-terminus, the 198-residue chain is SOSS complex subunit B2 (198 aa).

Residues 26 to 89 (IVLEIGRVTK…SMWKGCLTLY (64 aa)) constitute a DNA-binding region (OB). Residues 114–198 (EPNPDYRGQQ…ARDPRRAFKR (85 aa)) form a disordered region. Composition is skewed to polar residues over residues 136 to 151 (STNT…QTGP) and 173 to 188 (LPGT…TISN).

It belongs to the SOSS-B family. SOSS-B2 subfamily. Component of the SOSS complex, composed of SOSS-B (SOSS-B1/NABP2 or SOSS-B2/NABP1), SOSS-A/INTS3 and SOSS-C/INIP. SOSS complexes containing SOSS-B1/NABP2 are more abundant than complexes containing SOSS-B2/NABP1. Ubiquitous with high expression in the thymus.

The protein resides in the nucleus. Component of the SOSS complex, a multiprotein complex that functions downstream of the MRN complex to promote DNA repair and G2/M checkpoint. In the SOSS complex, acts as a sensor of single-stranded DNA that binds to single-stranded DNA, in particular to polypyrimidines. The SOSS complex associates with DNA lesions and influences diverse endpoints in the cellular DNA damage response including cell-cycle checkpoint activation, recombinational repair and maintenance of genomic stability. Required for efficient homologous recombination-dependent repair of double-strand breaks (DSBs) and ATM-dependent signaling pathways. This is SOSS complex subunit B2 (Nabp1) from Mus musculus (Mouse).